A 476-amino-acid chain; its full sequence is Calcium/calmodulin-dependent protein kinase type 1G (476 aa).

The Protein kinase domain occupies 23-277; sequence FIFMEVLGSG…CEKALSHPWI (255 aa). ATP contacts are provided by residues 29 to 37 and Lys-52; that span reads LGSGAFSEV. The Proton acceptor role is filled by Asp-143. Residues 277 to 317 are autoinhibitory domain; it reads IDGNTALHRDIYPSVSLQIQKNFAKSKWRQAFNAAAVVHHM. Residues 297–318 form a calmodulin-binding region; that stretch reads KNFAKSKWRQAFNAAAVVHHMR. Residues 325–352 form a disordered region; it reads HSPGVRPEVENRPPETQASETSRPSSPE. The segment covering 338–352 has biased composition (polar residues); it reads PETQASETSRPSSPE.

The protein belongs to the protein kinase superfamily. CAMK Ser/Thr protein kinase family. CaMK subfamily. May be prenylated on Cys-473. Mainly expressed in brain with small amounts in skeletal muscles, kidney, spleen and liver. Strongly expressed in forebrain neocortex, striatum and limbic system.

The protein resides in the cytoplasm. Its subcellular location is the golgi apparatus membrane. It is found in the cell membrane. The enzyme catalyses L-seryl-[protein] + ATP = O-phospho-L-seryl-[protein] + ADP + H(+). It carries out the reaction L-threonyl-[protein] + ATP = O-phospho-L-threonyl-[protein] + ADP + H(+). Its activity is regulated as follows. Activated by Ca(2+)/calmodulin. Binding of calmodulin is thought to result in a conformational change and leads to activation through phosphorylation by CAMKK1. Its function is as follows. Calcium/calmodulin-dependent protein kinase belonging to a proposed calcium-triggered signaling cascade. In vitro phosphorylates transcription factor CREB1. In Homo sapiens (Human), this protein is Calcium/calmodulin-dependent protein kinase type 1G (CAMK1G).